Consider the following 114-residue polypeptide: Large ribosomal subunit protein uL22 (114 aa).

This sequence belongs to the universal ribosomal protein uL22 family. As to quaternary structure, part of the 50S ribosomal subunit.

Its function is as follows. This protein binds specifically to 23S rRNA; its binding is stimulated by other ribosomal proteins, e.g. L4, L17, and L20. It is important during the early stages of 50S assembly. It makes multiple contacts with different domains of the 23S rRNA in the assembled 50S subunit and ribosome. Functionally, the globular domain of the protein is located near the polypeptide exit tunnel on the outside of the subunit, while an extended beta-hairpin is found that lines the wall of the exit tunnel in the center of the 70S ribosome. This is Large ribosomal subunit protein uL22 from Streptococcus pyogenes serotype M6 (strain ATCC BAA-946 / MGAS10394).